A 150-amino-acid chain; its full sequence is 3-dehydroquinate dehydratase (150 aa).

Tyrosine 26 acts as the Proton acceptor in catalysis. The substrate site is built by asparagine 77, histidine 83, and aspartate 90. Residue histidine 103 is the Proton donor of the active site. Residues 104–105 (LS) and arginine 114 each bind substrate.

The protein belongs to the type-II 3-dehydroquinase family. As to quaternary structure, homododecamer.

The enzyme catalyses 3-dehydroquinate = 3-dehydroshikimate + H2O. It participates in metabolic intermediate biosynthesis; chorismate biosynthesis; chorismate from D-erythrose 4-phosphate and phosphoenolpyruvate: step 3/7. Functionally, catalyzes a trans-dehydration via an enolate intermediate. In Pectobacterium carotovorum subsp. carotovorum (strain PC1), this protein is 3-dehydroquinate dehydratase.